A 262-amino-acid chain; its full sequence is Indole-3-glycerol phosphate synthase (262 aa).

It belongs to the TrpC family.

The enzyme catalyses 1-(2-carboxyphenylamino)-1-deoxy-D-ribulose 5-phosphate + H(+) = (1S,2R)-1-C-(indol-3-yl)glycerol 3-phosphate + CO2 + H2O. It functions in the pathway amino-acid biosynthesis; L-tryptophan biosynthesis; L-tryptophan from chorismate: step 4/5. The protein is Indole-3-glycerol phosphate synthase of Clostridium kluyveri (strain NBRC 12016).